An 804-amino-acid polypeptide reads, in one-letter code: Type 2 DNA topoisomerase 6 subunit B (804 aa).

Residues N58, D89, 110–111, 120–127, and K629 contribute to the ATP site; these read SR and GQQGIGIS.

Belongs to the TOP6B family. Homodimer. Heterotetramer of two Top6A and two Top6B chains.

It catalyses the reaction ATP-dependent breakage, passage and rejoining of double-stranded DNA.. In terms of biological role, relaxes both positive and negative superturns and exhibits a strong decatenase activity. The polypeptide is Type 2 DNA topoisomerase 6 subunit B (Halobacterium salinarum (strain ATCC 29341 / DSM 671 / R1)).